The primary structure comprises 126 residues: Holo-[acyl-carrier-protein] synthase (126 aa).

Mg(2+) is bound by residues D9 and E58.

This sequence belongs to the P-Pant transferase superfamily. AcpS family. In terms of assembly, homodimer. It depends on Mg(2+) as a cofactor.

The protein localises to the cytoplasm. It carries out the reaction apo-[ACP] + CoA = holo-[ACP] + adenosine 3',5'-bisphosphate + H(+). Functionally, transfers the 4'-phosphopantetheine moiety from coenzyme A to the 'Ser-36' of acyl-carrier-protein. In Escherichia coli O157:H7, this protein is Holo-[acyl-carrier-protein] synthase.